A 448-amino-acid chain; its full sequence is Chaperone SurA (448 aa).

Residues 1 to 27 (MKKTLRFAAVASGLVASLITVAPSASA) form the signal peptide. 2 PpiC domains span residues 185-288 (QQDL…RLVE) and 301-399 (IVQT…QVLG).

It localises to the periplasm. It carries out the reaction [protein]-peptidylproline (omega=180) = [protein]-peptidylproline (omega=0). Functionally, chaperone involved in the correct folding and assembly of outer membrane proteins. Recognizes specific patterns of aromatic residues and the orientation of their side chains, which are found more frequently in integral outer membrane proteins. May act in both early periplasmic and late outer membrane-associated steps of protein maturation. The sequence is that of Chaperone SurA from Burkholderia pseudomallei (strain 1710b).